Here is a 279-residue protein sequence, read N- to C-terminus: MPPVLRTVAELRARVSDWKAAGETVGVVPTMGALHEGHLSLARRARAACDRVIVTIFVNPRQFNNPADLEKYPRTEAQDAALLASVGVDAVFAPGPEEVYPRGFATNVSVSGVSEPLEGAHRPGHFDGVATVVAKLFGMTRADRAFFGEKDWQQLMVVQRLVADLNIPVTIEGCATVREADGLALSSRNRRLSVEGRARAPALVRAMQAAAEAMRGGRAIPEALAEARAAVLAAGFETVDYLELRTADLLLPMERLQGEGRLLAAATLDGVRLIDNIPV.

31–38 (MGALHEGH) provides a ligand contact to ATP. The active-site Proton donor is His-38. Position 62 (Gln-62) interacts with (R)-pantoate. A beta-alanine-binding site is contributed by Gln-62. An ATP-binding site is contributed by 148–151 (GEKD). Gln-154 contacts (R)-pantoate. ATP is bound by residues Val-177 and 185–188 (LSSR).

Belongs to the pantothenate synthetase family. As to quaternary structure, homodimer.

It is found in the cytoplasm. It carries out the reaction (R)-pantoate + beta-alanine + ATP = (R)-pantothenate + AMP + diphosphate + H(+). Its pathway is cofactor biosynthesis; (R)-pantothenate biosynthesis; (R)-pantothenate from (R)-pantoate and beta-alanine: step 1/1. Catalyzes the condensation of pantoate with beta-alanine in an ATP-dependent reaction via a pantoyl-adenylate intermediate. In Cereibacter sphaeroides (strain ATCC 17023 / DSM 158 / JCM 6121 / CCUG 31486 / LMG 2827 / NBRC 12203 / NCIMB 8253 / ATH 2.4.1.) (Rhodobacter sphaeroides), this protein is Pantothenate synthetase.